Consider the following 192-residue polypeptide: Transcription termination/antitermination protein NusG (192 aa).

Residues 140-168 (VGEIVIVTDGPFETFTGTVEEIDQEKNRL) enclose the KOW domain.

Belongs to the NusG family.

Its function is as follows. Participates in transcription elongation, termination and antitermination. The polypeptide is Transcription termination/antitermination protein NusG (Rickettsia felis (strain ATCC VR-1525 / URRWXCal2) (Rickettsia azadi)).